The primary structure comprises 93 residues: Small ribosomal subunit protein uS19 (93 aa).

Belongs to the universal ribosomal protein uS19 family.

In terms of biological role, protein S19 forms a complex with S13 that binds strongly to the 16S ribosomal RNA. This chain is Small ribosomal subunit protein uS19, found in Leuconostoc citreum (strain KM20).